A 511-amino-acid chain; its full sequence is Serine hydroxymethyltransferase (511 aa).

Position 287 is an N6-(pyridoxal phosphate)lysine (lysine 287).

Belongs to the SHMT family. Homotetramer. The cofactor is pyridoxal 5'-phosphate.

It carries out the reaction (6R)-5,10-methylene-5,6,7,8-tetrahydrofolate + glycine + H2O = (6S)-5,6,7,8-tetrahydrofolate + L-serine. It functions in the pathway one-carbon metabolism; tetrahydrofolate interconversion. Interconversion of serine and glycine. The protein is Serine hydroxymethyltransferase of Caenorhabditis briggsae.